The sequence spans 1300 residues: CRISPR-associated endonuclease Cas12a (1300 aa).

Residues 1-24 (MSIYQEFVNKYSLSKTLRFELIPQ) form a wedge region 1 region. 2 recognition domain regions span residues 25-339 (GKTL…SFVI) and 340-591 (DKLE…QKPY). 2 binds crRNA alone and in crRNA-target DNA heteroduplex regions span residues 47 to 51 (YKKAK) and 182 to 186 (FHENR). A binds DNA in crRNA-target DNA heteroduplex region spans residues 301 to 305 (NEYIN). Binds crRNA in crRNA-target DNA heteroduplex regions lie at residues 326–329 (KQIL) and 538–541 (HKLK). Residues 591–595 (YSDEK) are binds crRNA. Residues 592-662 (SDEKFKLNFE…GYKKIVYKLL (71 aa)) are wedge region 2. Positions 662–679 (LPGANKMLPKVFFSAKSI) are LKL, important for PAM recognition and DNA unwinding. Residues 663 to 762 (PGANKMLPKV…FYREVENQGY (100 aa)) are PAM-interacting domain (PI). Residues 671 to 677 (KVFFSAK) are binds DNA protospacer adjacent motif (PAM) on target DNA. Positions 692–704 (RNHSTHTKNGSPQ) are binds single-strand non-target DNA. A wedge region 3 region spans residues 763–892 (KLTFENISES…PITINFKSSG (130 aa)). Binds crRNA regions lie at residues 791-794 (KDFS) and 803-804 (LH). Residues H843, K852, and K869 each act as for pre-crRNA processing in the active site. Binds crRNA stretches follow at residues 851–853 (NKN) and 865–873 (YDLIKDKRF). The ruvC-I stretch occupies residues 893–953 (ANKFNDEINL…IGNDRMKTNY (61 aa)). D917 serves as the catalytic For DNase activity of RuvC domain. Residues 954–971 (HDKLAAIEKDRDSARKDW) form a bridge helix region. Residues 972-1078 (KKINNIKEMK…KQTGIIYYVP (107 aa)) are ruvC-II. The active-site For DNase activity of RuvC domain is the E1006. The tract at residues 1079-1254 (AGFTSKICPV…QAPKNMPQDA (176 aa)) is nuclease domain. Catalysis depends on D1255, which acts as the For DNase activity of RuvC domain. A ruvC-III region spans residues 1255–1300 (DANGAYHIGLKGLMLLGRIKNNQEGKKLNLVIKNEEYFEFVQNRNN).

Belongs to the CRISPR-associated endonuclease Cas12a family. As to quaternary structure, might be a homodimer. Might be a monomer. Ca(2+) is required as a cofactor. It depends on Mg(2+) as a cofactor.

The enzyme catalyses Endonucleolytic cleavage to 5'-phosphodinucleotide and 5'-phosphooligonucleotide end-products.. It catalyses the reaction RNA = a 5'-hydroxy-ribonucleotide + n nucleoside-2',3'-cyclophosphates.. In terms of biological role, CRISPR (clustered regularly interspaced short palindromic repeat), is an adaptive immune system that provides protection against mobile genetic elements (viruses, transposable elements and conjugative plasmids). CRISPR clusters contain sequences complementary to antecedent mobile elements and target invading nucleic acids. CRISPR clusters are transcribed and processed into CRISPR RNA (crRNA). Has endonuclease activity on pre-crRNA and dsDNA, using different active sites. A single-RNA guided endonuclease that is also capable of guiding crRNA processing; correct processing of pre-crRNA requires only this protein and the CRISPR locus. pre-crRNA processing proceeds by an intramolecular nucleophilic attack on the scissile phosphate by the 2'-OH of the upstream ribonucleotide, the divalent cation (which is bound by the crRNA) is probably required for ordering the crRNA pseudoknot and/or increasing RNA binding. RNA mutagenesis studies show pre-crRNA cleavage is highly sequence- and structure-specific. Forms a complex with crRNA and complementary dsDNA, where the crRNA displaces the non-target DNA strand and directs endonucleolytic cleavage of both strands of the DNA. Cleavage results in staggered 5-base 5' overhangs 14-18 and 21-23 bases downstream of the PAM (protospacer adjacent motif) on the non-target and target strands respectively. Both target and non-target strand DNA are probably independently cleaved in the same active site. When this protein is expressed in E.coli it prevents plasmids homologous to the first CRISPR spacer from transforming, formally showing it is responsible for plasmid immunity. The polypeptide is CRISPR-associated endonuclease Cas12a (Francisella tularensis subsp. novicida (strain U112)).